The following is a 151-amino-acid chain: 6,7-dimethyl-8-ribityllumazine synthase (151 aa).

Residues phenylalanine 18, 49-51, and 74-76 contribute to the 5-amino-6-(D-ribitylamino)uracil site; these read ALE and CVI. 79 to 80 lines the (2S)-2-hydroxy-3-oxobutyl phosphate pocket; it reads ET. Histidine 82 functions as the Proton donor in the catalytic mechanism. 5-amino-6-(D-ribitylamino)uracil is bound at residue asparagine 107. Arginine 121 is a (2S)-2-hydroxy-3-oxobutyl phosphate binding site.

It belongs to the DMRL synthase family.

It carries out the reaction (2S)-2-hydroxy-3-oxobutyl phosphate + 5-amino-6-(D-ribitylamino)uracil = 6,7-dimethyl-8-(1-D-ribityl)lumazine + phosphate + 2 H2O + H(+). It participates in cofactor biosynthesis; riboflavin biosynthesis; riboflavin from 2-hydroxy-3-oxobutyl phosphate and 5-amino-6-(D-ribitylamino)uracil: step 1/2. Catalyzes the formation of 6,7-dimethyl-8-ribityllumazine by condensation of 5-amino-6-(D-ribitylamino)uracil with 3,4-dihydroxy-2-butanone 4-phosphate. This is the penultimate step in the biosynthesis of riboflavin. The polypeptide is 6,7-dimethyl-8-ribityllumazine synthase (Bartonella tribocorum (strain CIP 105476 / IBS 506)).